Reading from the N-terminus, the 78-residue chain is MSDILERVRKIVIEHLDADPEKVTEKASFIDDLGADSLDNVELVMAFEEEFDIEIPDDAAEHIQTVGDAVKFITEKTA.

Residues 2-77 enclose the Carrier domain; the sequence is SDILERVRKI…DAVKFITEKT (76 aa). O-(pantetheine 4'-phosphoryl)serine is present on S37.

The protein belongs to the acyl carrier protein (ACP) family. In terms of processing, 4'-phosphopantetheine is transferred from CoA to a specific serine of apo-ACP by AcpS. This modification is essential for activity because fatty acids are bound in thioester linkage to the sulfhydryl of the prosthetic group.

Its subcellular location is the cytoplasm. It participates in lipid metabolism; fatty acid biosynthesis. Carrier of the growing fatty acid chain in fatty acid biosynthesis. The protein is Acyl carrier protein of Caulobacter vibrioides (strain ATCC 19089 / CIP 103742 / CB 15) (Caulobacter crescentus).